Consider the following 120-residue polypeptide: Aspartate 1-decarboxylase (120 aa).

Ser25 serves as the catalytic Schiff-base intermediate with substrate; via pyruvic acid. At Ser25 the chain carries Pyruvic acid (Ser). Thr57 is a substrate binding site. Tyr58 functions as the Proton donor in the catalytic mechanism. 73–75 (GAA) contacts substrate.

It belongs to the PanD family. Heterooctamer of four alpha and four beta subunits. Pyruvate is required as a cofactor. Is synthesized initially as an inactive proenzyme, which is activated by self-cleavage at a specific serine bond to produce a beta-subunit with a hydroxyl group at its C-terminus and an alpha-subunit with a pyruvoyl group at its N-terminus.

It localises to the cytoplasm. It catalyses the reaction L-aspartate + H(+) = beta-alanine + CO2. It participates in cofactor biosynthesis; (R)-pantothenate biosynthesis; beta-alanine from L-aspartate: step 1/1. Functionally, catalyzes the pyruvoyl-dependent decarboxylation of aspartate to produce beta-alanine. The chain is Aspartate 1-decarboxylase from Thermus thermophilus (strain ATCC 27634 / DSM 579 / HB8).